The primary structure comprises 379 residues: Putative acetyl-CoA C-acetyltransferase VraB (379 aa).

Cys-86 (acyl-thioester intermediate) is an active-site residue. His-338 serves as the catalytic Proton acceptor.

It belongs to the thiolase-like superfamily. Thiolase family.

This chain is Putative acetyl-CoA C-acetyltransferase VraB (vraB), found in Staphylococcus aureus (strain MRSA252).